Here is a 31-residue protein sequence, read N- to C-terminus: Potassium channel toxin alpha-KTx 5.4 (31 aa).

3 cysteine pairs are disulfide-bonded: C3–C21, C8–C26, and C12–C28. Residues 6–9 (RRCE) form a [R/K]XCQ motif region. Position 31 is a tyrosine amide (Y31).

It belongs to the short scorpion toxin superfamily. Potassium channel inhibitor family. Alpha-KTx 05 subfamily. In terms of tissue distribution, expressed by the venom gland.

The protein localises to the secreted. Functionally, blocks small conductance calcium-activated potassium channels. Shows activity on KCa2.2/KCNN2 (IC(50)=0.0243 nM), KCa2.3/KCNN3 (IC(50)=1.7 nM), and KCa2.1/KCNN1 (IC(50)=42 nM). Induces cell death when tested on human T lymphoblastic leukemia Jurkat E6.1 and human breast cancer MDA-MB-231 cell lines which constituvely express KCa2.2/KCNN2, but not on human peripheral blood lymphocytes (which do not express KCa2.2/KCNN2). The sequence is that of Potassium channel toxin alpha-KTx 5.4 from Hottentotta tamulus (Eastern Indian scorpion).